Reading from the N-terminus, the 282-residue chain is Bifunctional protein FolD (282 aa).

NADP(+) is bound by residues glycine 165–serine 167 and isoleucine 231.

Belongs to the tetrahydrofolate dehydrogenase/cyclohydrolase family. As to quaternary structure, homodimer.

It carries out the reaction (6R)-5,10-methylene-5,6,7,8-tetrahydrofolate + NADP(+) = (6R)-5,10-methenyltetrahydrofolate + NADPH. The enzyme catalyses (6R)-5,10-methenyltetrahydrofolate + H2O = (6R)-10-formyltetrahydrofolate + H(+). Its pathway is one-carbon metabolism; tetrahydrofolate interconversion. In terms of biological role, catalyzes the oxidation of 5,10-methylenetetrahydrofolate to 5,10-methenyltetrahydrofolate and then the hydrolysis of 5,10-methenyltetrahydrofolate to 10-formyltetrahydrofolate. The sequence is that of Bifunctional protein FolD from Francisella philomiragia subsp. philomiragia (strain ATCC 25017 / CCUG 19701 / FSC 153 / O#319-036).